Consider the following 78-residue polypeptide: Small ribosomal subunit protein uS17 (78 aa).

This sequence belongs to the universal ribosomal protein uS17 family. As to quaternary structure, part of the 30S ribosomal subunit.

Functionally, one of the primary rRNA binding proteins, it binds specifically to the 5'-end of 16S ribosomal RNA. This chain is Small ribosomal subunit protein uS17, found in Parvibaculum lavamentivorans (strain DS-1 / DSM 13023 / NCIMB 13966).